A 101-amino-acid chain; its full sequence is NADH-quinone oxidoreductase subunit K (101 aa).

Transmembrane regions (helical) follow at residues 4–24 (LTHY…GIFM), 30–50 (LVLL…FIAF), and 61–81 (IFVF…LAIM).

This sequence belongs to the complex I subunit 4L family. In terms of assembly, NDH-1 is composed of 14 different subunits. Subunits NuoA, H, J, K, L, M, N constitute the membrane sector of the complex.

The protein localises to the cell inner membrane. It carries out the reaction a quinone + NADH + 5 H(+)(in) = a quinol + NAD(+) + 4 H(+)(out). NDH-1 shuttles electrons from NADH, via FMN and iron-sulfur (Fe-S) centers, to quinones in the respiratory chain. The immediate electron acceptor for the enzyme in this species is believed to be ubiquinone. Couples the redox reaction to proton translocation (for every two electrons transferred, four hydrogen ions are translocated across the cytoplasmic membrane), and thus conserves the redox energy in a proton gradient. The chain is NADH-quinone oxidoreductase subunit K from Neisseria meningitidis serogroup B (strain ATCC BAA-335 / MC58).